The chain runs to 470 residues: Ribulose bisphosphate carboxylase large chain (470 aa).

The substrate site is built by asparagine 115 and threonine 165. Catalysis depends on lysine 167, which acts as the Proton acceptor. Lysine 169 provides a ligand contact to substrate. The Mg(2+) site is built by lysine 193, aspartate 195, and glutamate 196. Lysine 193 bears the N6-carboxylysine mark. Histidine 286 (proton acceptor) is an active-site residue. Positions 287, 319, and 371 each coordinate substrate.

This sequence belongs to the RuBisCO large chain family. Type I subfamily. Heterohexadecamer of 8 large chains and 8 small chains. It depends on Mg(2+) as a cofactor.

The protein resides in the carboxysome. It catalyses the reaction 2 (2R)-3-phosphoglycerate + 2 H(+) = D-ribulose 1,5-bisphosphate + CO2 + H2O. The enzyme catalyses D-ribulose 1,5-bisphosphate + O2 = 2-phosphoglycolate + (2R)-3-phosphoglycerate + 2 H(+). Its function is as follows. RuBisCO catalyzes two reactions: the carboxylation of D-ribulose 1,5-bisphosphate, the primary event in carbon dioxide fixation, as well as the oxidative fragmentation of the pentose substrate in the photorespiration process. Both reactions occur simultaneously and in competition at the same active site. This Prochlorococcus marinus (strain NATL1A) protein is Ribulose bisphosphate carboxylase large chain.